We begin with the raw amino-acid sequence, 51 residues long: Large ribosomal subunit protein bL33 (51 aa).

It belongs to the bacterial ribosomal protein bL33 family.

The chain is Large ribosomal subunit protein bL33 from Alteromonas mediterranea (strain DSM 17117 / CIP 110805 / LMG 28347 / Deep ecotype).